The primary structure comprises 442 residues: Yes-associated protein homolog 1 (442 aa).

The segment covering M1–H10 has biased composition (basic residues). The tract at residues M1–A84 is disordered. 2 stretches are compositionally biased toward polar residues: residues N13–S22 and L55–H71. A Phosphoserine modification is found at S104. Positions L108–T120 are enriched in polar residues. The interval L108–S136 is disordered. Basic residues predominate over residues P124–S134. In terms of domain architecture, WW spans L203–L236.

It belongs to the YAP1 family. Highly divergent. As to quaternary structure, interacts (via WW domain) with wts-1 (via N-terminus). Interacts (via WW domain) with egl-44; the interaction may regulate transcription. As to expression, expressed in epithelia, hypodermis, muscles, pharynx, intestine, gonadal sheath cells, vulva, spermatheca and in excretory tissue.

It is found in the cytoplasm. It localises to the nucleus. The protein localises to the cell projection. The protein resides in the cilium. Its subcellular location is the cytoskeleton. It is found in the cilium axoneme. Functionally, plays a role in thermal stress response and in aging. This Caenorhabditis elegans protein is Yes-associated protein homolog 1.